Here is a 541-residue protein sequence, read N- to C-terminus: uncharacterized protein (541 aa).

Helical transmembrane passes span 57–77 (LVVTANLLGIGVALLLVTIAI), 90–110 (LTFGVVPGYVLLALALGSYAL), 144–164 (VGHLMFWGVGTALLTTLYGLI), 167–187 (AFIPRFLFAVSFCGVLVATAT), 221–241 (MVVWLLGSGVPVVGIALMAMF), and 257–277 (VLIISMVTLVFGFILMWILAW). Positions 278-329 (LTATPVRVVRAALRRVERGELRTNLVVFDGTELGELQRGFNAMVAGLRERER) constitute an HAMP domain. The Guanylate cyclase domain maps to 361–485 (AVVFIDIVGS…EPVNEAARLC (125 aa)).

Belongs to the adenylyl cyclase class-3 family.

The protein localises to the cell membrane. This is an uncharacterized protein from Mycobacterium tuberculosis (strain CDC 1551 / Oshkosh).